A 158-amino-acid chain; its full sequence is NAD(P)H-quinone oxidoreductase subunit N (158 aa).

This sequence belongs to the complex I NdhN subunit family. As to quaternary structure, NDH-1 can be composed of about 15 different subunits; different subcomplexes with different compositions have been identified which probably have different functions.

The protein localises to the cellular thylakoid membrane. The enzyme catalyses a plastoquinone + NADH + (n+1) H(+)(in) = a plastoquinol + NAD(+) + n H(+)(out). It carries out the reaction a plastoquinone + NADPH + (n+1) H(+)(in) = a plastoquinol + NADP(+) + n H(+)(out). NDH-1 shuttles electrons from an unknown electron donor, via FMN and iron-sulfur (Fe-S) centers, to quinones in the respiratory and/or the photosynthetic chain. The immediate electron acceptor for the enzyme in this species is believed to be plastoquinone. Couples the redox reaction to proton translocation, and thus conserves the redox energy in a proton gradient. Cyanobacterial NDH-1 also plays a role in inorganic carbon-concentration. The polypeptide is NAD(P)H-quinone oxidoreductase subunit N (Gloeothece citriformis (strain PCC 7424) (Cyanothece sp. (strain PCC 7424))).